Reading from the N-terminus, the 495-residue chain is uncharacterized protein (495 aa).

The TRAM domain occupies 16 to 74 (SSKRGDLIELAVTALDEDGNGIGTHDGTNVHVIGALPDERVRARLTHVGKRHLHAEAVE). Positions 88, 94, 97, and 175 each coordinate [4Fe-4S] cluster. The S-adenosyl-L-methionine site is built by Q299, Y328, E349, and N397. C424 serves as the catalytic Nucleophile. Over residues 472-483 (DRLESPAKERSR) the composition is skewed to basic and acidic residues. Residues 472–495 (DRLESPAKERSRPRASHKAKGGAV) form a disordered region. A compositionally biased stretch (basic residues) spans 484–495 (PRASHKAKGGAV).

The protein belongs to the class I-like SAM-binding methyltransferase superfamily. RNA M5U methyltransferase family.

This is an uncharacterized protein from Geobacter sulfurreducens (strain ATCC 51573 / DSM 12127 / PCA).